The sequence spans 177 residues: Large ribosomal subunit protein uL6 (177 aa).

Belongs to the universal ribosomal protein uL6 family. As to quaternary structure, part of the 50S ribosomal subunit.

Functionally, this protein binds to the 23S rRNA, and is important in its secondary structure. It is located near the subunit interface in the base of the L7/L12 stalk, and near the tRNA binding site of the peptidyltransferase center. In Cereibacter sphaeroides (strain ATCC 17029 / ATH 2.4.9) (Rhodobacter sphaeroides), this protein is Large ribosomal subunit protein uL6.